A 423-amino-acid polypeptide reads, in one-letter code: Histidine--tRNA ligase 2 (423 aa).

Belongs to the class-II aminoacyl-tRNA synthetase family. In terms of assembly, homodimer.

It is found in the cytoplasm. It carries out the reaction tRNA(His) + L-histidine + ATP = L-histidyl-tRNA(His) + AMP + diphosphate + H(+). This chain is Histidine--tRNA ligase 2, found in Bacillus anthracis.